We begin with the raw amino-acid sequence, 58 residues long: Large ribosomal subunit protein uL30 (58 aa).

It belongs to the universal ribosomal protein uL30 family. As to quaternary structure, part of the 50S ribosomal subunit.

The chain is Large ribosomal subunit protein uL30 from Vibrio vulnificus (strain CMCP6).